The chain runs to 455 residues: Bifunctional protein GlmU (455 aa).

Positions 1-226 (MGLSVVILAA…EFEILGVNDR (226 aa)) are pyrophosphorylase. UDP-N-acetyl-alpha-D-glucosamine contacts are provided by residues 8–11 (LAAG), Lys-22, Gln-73, 78–79 (GT), 99–101 (YGD), Gly-136, Glu-151, Asn-166, and Asn-224. Asp-101 lines the Mg(2+) pocket. Mg(2+) is bound at residue Asn-224. Residues 227-247 (TQLASLERVWQRNVAEKIMAK) are linker. An N-acetyltransferase region spans residues 248-455 (GVSIADPNRF…WQRSVKKTDK (208 aa)). The UDP-N-acetyl-alpha-D-glucosamine site is built by Arg-330 and Lys-348. Residue His-360 is the Proton acceptor of the active site. Residues Tyr-363 and Asn-374 each contribute to the UDP-N-acetyl-alpha-D-glucosamine site. Acetyl-CoA-binding positions include Ala-377, 383 to 384 (NY), Ser-402, Ala-420, and Arg-437.

It in the N-terminal section; belongs to the N-acetylglucosamine-1-phosphate uridyltransferase family. The protein in the C-terminal section; belongs to the transferase hexapeptide repeat family. As to quaternary structure, homotrimer. It depends on Mg(2+) as a cofactor.

It localises to the cytoplasm. The catalysed reaction is alpha-D-glucosamine 1-phosphate + acetyl-CoA = N-acetyl-alpha-D-glucosamine 1-phosphate + CoA + H(+). The enzyme catalyses N-acetyl-alpha-D-glucosamine 1-phosphate + UTP + H(+) = UDP-N-acetyl-alpha-D-glucosamine + diphosphate. It participates in nucleotide-sugar biosynthesis; UDP-N-acetyl-alpha-D-glucosamine biosynthesis; N-acetyl-alpha-D-glucosamine 1-phosphate from alpha-D-glucosamine 6-phosphate (route II): step 2/2. It functions in the pathway nucleotide-sugar biosynthesis; UDP-N-acetyl-alpha-D-glucosamine biosynthesis; UDP-N-acetyl-alpha-D-glucosamine from N-acetyl-alpha-D-glucosamine 1-phosphate: step 1/1. The protein operates within bacterial outer membrane biogenesis; LPS lipid A biosynthesis. Functionally, catalyzes the last two sequential reactions in the de novo biosynthetic pathway for UDP-N-acetylglucosamine (UDP-GlcNAc). The C-terminal domain catalyzes the transfer of acetyl group from acetyl coenzyme A to glucosamine-1-phosphate (GlcN-1-P) to produce N-acetylglucosamine-1-phosphate (GlcNAc-1-P), which is converted into UDP-GlcNAc by the transfer of uridine 5-monophosphate (from uridine 5-triphosphate), a reaction catalyzed by the N-terminal domain. The protein is Bifunctional protein GlmU of Francisella tularensis subsp. tularensis (strain SCHU S4 / Schu 4).